Consider the following 1185-residue polypeptide: Ovostatin homolog 1 (1185 aa).

An N-terminal signal peptide occupies residues 1-21 (MHVHVCVCLCVCIYTSSCVCA). N-linked (GlcNAc...) asparagine glycans are attached at residues Asn80, Asn155, Asn347, Asn452, and Asn725.

This sequence belongs to the protease inhibitor I39 (alpha-2-macroglobulin) family. In terms of assembly, homotetramer.

Its subcellular location is the secreted. In terms of biological role, is able to inhibit all four classes of proteinases by a unique 'trapping' mechanism. The chain is Ovostatin homolog 1 (OVOS1) from Homo sapiens (Human).